The following is a 228-amino-acid chain: Ribosomal RNA small subunit methyltransferase G (228 aa).

S-adenosyl-L-methionine is bound by residues glycine 89, leucine 94, 140–141 (VE), and arginine 159.

It belongs to the methyltransferase superfamily. RNA methyltransferase RsmG family.

It is found in the cytoplasm. It carries out the reaction guanosine(527) in 16S rRNA + S-adenosyl-L-methionine = N(7)-methylguanosine(527) in 16S rRNA + S-adenosyl-L-homocysteine. Functionally, specifically methylates the N7 position of guanine in position 527 of 16S rRNA. This chain is Ribosomal RNA small subunit methyltransferase G, found in Burkholderia cenocepacia (strain HI2424).